The sequence spans 1484 residues: Cystic fibrosis transmembrane conductance regulator (1484 aa).

Over 1 to 77 (MQRSPLEKAS…KLINALRRCF (77 aa)) the chain is Cytoplasmic. A helical transmembrane segment spans residues 78–98 (FWRFMFYGIILYLGEVTKSVQ). In terms of domain architecture, ABC transmembrane type-1 1 spans 81-365 (FMFYGIILYL…WAVQTWYDSL (285 aa)). At 99 to 122 (PLLLGRIIASYDPDNKEERSIAIY) the chain is on the extracellular side. A helical transmembrane segment spans residues 123-146 (LGIGLCLLFVMRTLLLHPAIFGLH). Residues 147–195 (RIGMQMRIAMFSLIYKKTLKLSSRVLDKISIGQLVSLLSNNLNKFDEGL) are Cytoplasmic-facing. A helical transmembrane segment spans residues 196-216 (ALAHFVWIAPLQVTLLMGLLW). Topologically, residues 217 to 222 (DLLQAS) are extracellular. Residues 223-243 (AFCGLAFLIVLALFQAGLGRM) traverse the membrane as a helical segment. Topologically, residues 244-298 (MMKYRDQRAGKINERLVITSEMIENIQSVKAYCWEEAMEKMIESIRQTELKLTRK) are cytoplasmic. A helical membrane pass occupies residues 299–319 (AAYVRYFNSSAFFFSGFFVVF). Residues 320-339 (LSVLPYALIKTIVLRKIFTT) are Extracellular-facing. The helical transmembrane segment at 340–358 (ISFCIVLRMAVTRQFPWAV) threads the bilayer. Topologically, residues 359 to 860 (QTWYDSLGAI…YLRYVTIHKS (502 aa)) are cytoplasmic. ATP-binding positions include tryptophan 401, serine 434, 458 to 465 (GSTGAGKT), and glutamine 493. The 224-residue stretch at 423-646 (NADNSLFFSN…RPDFSSKLMG (224 aa)) folds into the ABC transporter 1 domain. Cysteine 524 is lipidated: S-palmitoyl cysteine. Residues serine 549 and serine 660 each carry the phosphoserine modification. Residues 654 to 833 (SAERRNSIIT…EEINEEDLKE (180 aa)) form a disordered R region region. Residue serine 670 is modified to Phosphoserine; by PKA. The residue at position 686 (serine 686) is a Phosphoserine. A Glycyl lysine isopeptide (Lys-Gly) (interchain with G-Cter in ubiquitin) cross-link involves residue lysine 688. Phosphoserine is present on residues serine 700 and serine 712. A Phosphothreonine modification is found at threonine 717. Serine 737, serine 769, serine 792, serine 797, and serine 815 each carry phosphoserine. A helical transmembrane segment spans residues 861-881 (LVFVLIWCLVIFLAEVAISLV). The 297-residue stretch at 861 to 1157 (LVFVLIWCLV…AVNSSIDVDS (297 aa)) folds into the ABC transmembrane type-1 2 domain. The Extracellular portion of the chain corresponds to 882-920 (VLWLLKKTASQDKGNSTQSINSSYTVIFTSTSTYYVFYI). Residues asparagine 896 and asparagine 902 are each glycosylated (N-linked (GlcNAc...) asparagine). The discontinuously helical transmembrane segment at 921-941 (YVGVADTLLALGFFRGLPLVH) threads the bilayer. The Cytoplasmic segment spans residues 942 to 992 (TLITVSKILHHKMLHAVLQAPMSTLNALKAGGILNRFSKDIAILDDLLPLT). The chain crosses the membrane as a helical span at residues 993–1013 (IFDFVQLLLIVIGAVTVVSAL). The Extracellular segment spans residues 1014–1015 (QP). The chain crosses the membrane as a helical span at residues 1016–1036 (YIFLATVPVIAAFIMLRAYFL). Topologically, residues 1037-1097 (HTSQQLKQLE…TANWFLYLST (61 aa)) are cytoplasmic. The helical transmembrane segment at 1098–1118 (LRWFQMRMEIIFVIFFIAITF) threads the bilayer. Residues 1119-1132 (ISILTTGEGVGAVG) lie on the Extracellular side of the membrane. The chain crosses the membrane as a helical span at residues 1133-1153 (IILTLAMNIMGTLQWAVNSSI). At 1154-1484 (DVDSLMRSVS…TEEEVQETRL (331 aa)) the chain is on the cytoplasmic side. Residues 1214–1447 (MTVKDLTAKY…KSLFRQAISP (234 aa)) enclose the ABC transporter 2 domain. ATP contacts are provided by residues tyrosine 1223 and 1248 to 1255 (GRTGSGKS). The interaction with GORASP2 stretch occupies residues 1390-1484 (RTLKQAFADC…TEEEVQETRL (95 aa)). Cysteine 1399 carries the S-palmitoyl cysteine lipid modification. 2 positions are modified to phosphoserine: serine 1448 and serine 1460. The span at 1456–1465 (HRNSSKHKSR) shows a compositional bias: basic residues. The interval 1456 to 1484 (HRNSSKHKSRSQIAALKEETEEEVQETRL) is disordered. Residues 1474–1484 (ETEEEVQETRL) show a composition bias toward acidic residues. The PDZ-binding motif lies at 1482 to 1484 (TRL).

Belongs to the ABC transporter superfamily. ABCC family. CFTR transporter (TC 3.A.1.202) subfamily. In terms of assembly, monomer; does not require oligomerization for channel activity. May form oligomers in the membrane. Interacts with SLC26A3, SLC26A6 and NHERF1. Interacts with SHANK2. Interacts with MYO6. Interacts (via C-terminus) with GOPC (via PDZ domain); this promotes CFTR internalization and thereby decreases channel activity. Interacts with SLC4A7 through NHERF1. Found in a complex with MYO5B and RAB11A. Interacts with ANO1. Interacts with SLC26A8. Interacts with AHCYL1; the interaction increases CFTR activity. Interacts with CSE1L. The core-glycosylated form interacts with GORASP2 (via PDZ GRASP-type 1 domain) in respone to ER stress. Interacts with MARCHF2; the interaction leads to CFTR ubiqtuitination and degradation. Interacts with ADGRG2. N-glycosylated. In terms of processing, phosphorylated; cAMP treatment promotes phosphorylation and activates the channel. Dephosphorylation decreases the ATPase activity (in vitro). Phosphorylation at PKA sites activates the channel. Phosphorylation at PKC sites enhances the response to phosphorylation by PKA. Phosphorylated by AMPK; this inhibits channel activity. Post-translationally, ubiquitinated, leading to its degradation in the lysosome. Deubiquitination by USP10 in early endosomes enhances its endocytic recycling to the cell membrane. Ubiquitinated by RNF185 during ER stress. Ubiquitinated by MARCHF2.

The protein localises to the apical cell membrane. Its subcellular location is the early endosome membrane. The protein resides in the cell membrane. It localises to the recycling endosome membrane. It is found in the endoplasmic reticulum membrane. The protein localises to the nucleus. The enzyme catalyses ATP + H2O + closed Cl(-) channel = ADP + phosphate + open Cl(-) channel.. The catalysed reaction is chloride(in) = chloride(out). It carries out the reaction hydrogencarbonate(in) = hydrogencarbonate(out). It catalyses the reaction ATP + H2O = ADP + phosphate + H(+). In terms of biological role, epithelial ion channel that plays an important role in the regulation of epithelial ion and water transport and fluid homeostasis. Mediates the transport of chloride ions across the cell membrane. Possesses an intrinsic ATPase activity and utilizes ATP to gate its channel; the passive flow of anions through the channel is gated by cycles of ATP binding and hydrolysis by the ATP-binding domains. The ion channel is also permeable to HCO(3)(-); selectivity depends on the extracellular chloride concentration. Exerts its function also by modulating the activity of other ion channels and transporters. Contributes to the regulation of the pH and the ion content of the epithelial fluid layer. Modulates the activity of the epithelial sodium channel (ENaC) complex, in part by regulating the cell surface expression of the ENaC complex. May regulate bicarbonate secretion and salvage in epithelial cells by regulating the transporter SLC4A7. Can inhibit the chloride channel activity of ANO1. Plays a role in the chloride and bicarbonate homeostasis during sperm epididymal maturation and capacitation. The polypeptide is Cystic fibrosis transmembrane conductance regulator (Mustela putorius furo (European domestic ferret)).